Here is a 287-residue protein sequence, read N- to C-terminus: 4-hydroxybenzoate octaprenyltransferase (287 aa).

6 helical membrane passes run 41-61, 89-109, 133-153, 158-178, 202-224, and 266-286; these read WPLL…GCAM, WEAV…ILPL, FFAI…PMAF, DTVP…SVAY, FGRF…YVWI, and HNNW…LLAG.

Belongs to the UbiA prenyltransferase family. Mg(2+) serves as cofactor.

The protein localises to the cell inner membrane. It catalyses the reaction all-trans-octaprenyl diphosphate + 4-hydroxybenzoate = 4-hydroxy-3-(all-trans-octaprenyl)benzoate + diphosphate. The protein operates within cofactor biosynthesis; ubiquinone biosynthesis. Its function is as follows. Catalyzes the prenylation of para-hydroxybenzoate (PHB) with an all-trans polyprenyl group. Mediates the second step in the final reaction sequence of ubiquinone-8 (UQ-8) biosynthesis, which is the condensation of the polyisoprenoid side chain with PHB, generating the first membrane-bound Q intermediate 3-octaprenyl-4-hydroxybenzoate. This is 4-hydroxybenzoate octaprenyltransferase from Burkholderia orbicola (strain MC0-3).